A 202-amino-acid chain; its full sequence is Dephospho-CoA kinase (202 aa).

The 198-residue stretch at 5-202 folds into the DPCK domain; the sequence is ILGLTGGIGS…FYLTLRGGQP (198 aa). 13–18 lines the ATP pocket; sequence GSGKSA.

The protein belongs to the CoaE family.

It is found in the cytoplasm. It catalyses the reaction 3'-dephospho-CoA + ATP = ADP + CoA + H(+). It functions in the pathway cofactor biosynthesis; coenzyme A biosynthesis; CoA from (R)-pantothenate: step 5/5. In terms of biological role, catalyzes the phosphorylation of the 3'-hydroxyl group of dephosphocoenzyme A to form coenzyme A. This Stutzerimonas stutzeri (Pseudomonas stutzeri) protein is Dephospho-CoA kinase.